The primary structure comprises 124 residues: Aspartate 1-decarboxylase (124 aa).

Ser21 acts as the Schiff-base intermediate with substrate; via pyruvic acid in catalysis. A Pyruvic acid (Ser) modification is found at Ser21. Thr53 provides a ligand contact to substrate. Tyr54 serves as the catalytic Proton donor. A substrate-binding site is contributed by 69-71; sequence GAA.

This sequence belongs to the PanD family. In terms of assembly, heterooctamer of four alpha and four beta subunits. Pyruvate serves as cofactor. Is synthesized initially as an inactive proenzyme, which is activated by self-cleavage at a specific serine bond to produce a beta-subunit with a hydroxyl group at its C-terminus and an alpha-subunit with a pyruvoyl group at its N-terminus.

Its subcellular location is the cytoplasm. The catalysed reaction is L-aspartate + H(+) = beta-alanine + CO2. The protein operates within cofactor biosynthesis; (R)-pantothenate biosynthesis; beta-alanine from L-aspartate: step 1/1. Catalyzes the pyruvoyl-dependent decarboxylation of aspartate to produce beta-alanine. The chain is Aspartate 1-decarboxylase from Dehalococcoides mccartyi (strain ATCC BAA-2266 / KCTC 15142 / 195) (Dehalococcoides ethenogenes (strain 195)).